A 428-amino-acid polypeptide reads, in one-letter code: Isocitrate dehydrogenase [NADP], mitochondrial (428 aa).

The N-terminal 16 residues, Met1 to Ala16, are a transit peptide targeting the mitochondrion. Residues Thr91 to Thr93 and Arg98 contribute to the NADP(+) site. Residue Thr93 participates in substrate binding. Substrate is bound by residues Ser110–Arg116, Arg125, and Arg148. Residue Asp269 participates in Mn(2+) binding. Residue Lys277 participates in NADP(+) binding. Asp292 is a Mn(2+) binding site. Residues Gly327 to His332 and Asn345 contribute to the NADP(+) site.

This sequence belongs to the isocitrate and isopropylmalate dehydrogenases family. In terms of assembly, homodimer. It depends on Mg(2+) as a cofactor. Mn(2+) is required as a cofactor.

The protein resides in the mitochondrion. It carries out the reaction D-threo-isocitrate + NADP(+) = 2-oxoglutarate + CO2 + NADPH. Its activity is regulated as follows. The enzyme is subject to end product inhibition by NADPH and 2-oxoglutarate. Its function is as follows. Mitochondrial IDP1 may regulate flux through the tricarboxylic acid cycle and respiration. Its probably critical function is the production of NADPH. The protein is Isocitrate dehydrogenase [NADP], mitochondrial (IDP1) of Saccharomyces cerevisiae (strain ATCC 204508 / S288c) (Baker's yeast).